The following is a 395-amino-acid chain: Imidazolonepropionase (395 aa).

Residues His63 and His65 each contribute to the Fe(3+) site. Residues His63 and His65 each coordinate Zn(2+). 4-imidazolone-5-propanoate-binding residues include Arg72, Tyr135, and His168. Tyr135 lines the N-formimidoyl-L-glutamate pocket. A Fe(3+)-binding site is contributed by His233. His233 is a binding site for Zn(2+). Gln236 provides a ligand contact to 4-imidazolone-5-propanoate. A Fe(3+)-binding site is contributed by Asp308. Asp308 lines the Zn(2+) pocket. Positions 310 and 312 each coordinate N-formimidoyl-L-glutamate. Thr313 lines the 4-imidazolone-5-propanoate pocket.

The protein belongs to the metallo-dependent hydrolases superfamily. HutI family. Zn(2+) serves as cofactor. Fe(3+) is required as a cofactor.

It localises to the cytoplasm. It catalyses the reaction 4-imidazolone-5-propanoate + H2O = N-formimidoyl-L-glutamate. The protein operates within amino-acid degradation; L-histidine degradation into L-glutamate; N-formimidoyl-L-glutamate from L-histidine: step 3/3. Its function is as follows. Catalyzes the hydrolytic cleavage of the carbon-nitrogen bond in imidazolone-5-propanoate to yield N-formimidoyl-L-glutamate. It is the third step in the universal histidine degradation pathway. This Cereibacter sphaeroides (strain ATCC 17023 / DSM 158 / JCM 6121 / CCUG 31486 / LMG 2827 / NBRC 12203 / NCIMB 8253 / ATH 2.4.1.) (Rhodobacter sphaeroides) protein is Imidazolonepropionase.